Here is a 376-residue protein sequence, read N- to C-terminus: Polycomb group protein FIE1 (376 aa).

WD repeat units follow at residues 85–127 (DKDE…LLKT), 130–170 (GHGD…CILI), 176–216 (GHRN…PYVE), 242–279 (VHSN…QSPG), 291–332 (VPEC…PVLT), and 339–376 (QCKS…HPKA).

This sequence belongs to the WD repeat ESC family. Interacts with EZ1. Component of the polycomb repressive complex 2 (PRC2), composed of the core PRC2 components EMF2B, EZ1 and CLF. PRC2 methylates 'Lys-27' residues of histone H3 (H3K27me3), leading to transcriptional repression of the affected target gene. In terms of tissue distribution, widely expressed.

In terms of biological role, polycomb group (PcG) protein. PcG proteins act by forming multiprotein complexes, which are required to maintain the transcriptionally repressive state of homeotic genes throughout development. PcG proteins are not required to initiate repression, but to maintain it during later stages of development. They act via the methylation of histones, rendering chromatin heritably changed in its expressibility. Involved in the regulation of seed endosperm development, grain filling and seed dormancy. FIE2-containing PcG complex in seed endosperm regulates the expression of various transcription factors by trimethylation on histone H3 'Lys-27' (H3K27me3) of target genes. Involved in the overall expression regulation of a large number of nutrient metabolism genes. Involved in the regulation of seed endosperm development. Involved in the regulation of vegetative development, particularly in stem cell maintenance in the root system, where it maintains the suppression of key differentiation regulators. The sequence is that of Polycomb group protein FIE1 from Oryza sativa subsp. japonica (Rice).